Here is a 156-residue protein sequence, read N- to C-terminus: MTQSQHSQSPREALAERIVEAKTRKNLTFEQINEGTGLSVAFTTAALLGQHPLPADAARVVAAKLDLDDDAQRLLQTIPVRGSIPGGVPTDPTIYRFYEIVQVYGSTLKALIHEQFGDGIVSAINFKLDIKKVDDPEGGSRAVITLDGKYLPTKPF.

Catalysis depends on residues R96, E99, and S122.

It belongs to the cyanase family.

It carries out the reaction cyanate + hydrogencarbonate + 3 H(+) = NH4(+) + 2 CO2. In terms of biological role, catalyzes the reaction of cyanate with bicarbonate to produce ammonia and carbon dioxide. The polypeptide is Cyanate hydratase (Burkholderia mallei (strain NCTC 10247)).